Here is a 161-residue protein sequence, read N- to C-terminus: 2-C-methyl-D-erythritol 2,4-cyclodiphosphate synthase (161 aa).

A divalent metal cation contacts are provided by aspartate 11 and histidine 13. Residues 11–13 (DIH) and 37–38 (HS) contribute to the 4-CDP-2-C-methyl-D-erythritol 2-phosphate site. Residue histidine 45 coordinates a divalent metal cation. 4-CDP-2-C-methyl-D-erythritol 2-phosphate contacts are provided by residues 59-61 (DIG), 135-138 (TTNE), and arginine 145.

Belongs to the IspF family. Homotrimer. The cofactor is a divalent metal cation.

It catalyses the reaction 4-CDP-2-C-methyl-D-erythritol 2-phosphate = 2-C-methyl-D-erythritol 2,4-cyclic diphosphate + CMP. It participates in isoprenoid biosynthesis; isopentenyl diphosphate biosynthesis via DXP pathway; isopentenyl diphosphate from 1-deoxy-D-xylulose 5-phosphate: step 4/6. Involved in the biosynthesis of isopentenyl diphosphate (IPP) and dimethylallyl diphosphate (DMAPP), two major building blocks of isoprenoid compounds. Catalyzes the conversion of 4-diphosphocytidyl-2-C-methyl-D-erythritol 2-phosphate (CDP-ME2P) to 2-C-methyl-D-erythritol 2,4-cyclodiphosphate (ME-CPP) with a corresponding release of cytidine 5-monophosphate (CMP). The sequence is that of 2-C-methyl-D-erythritol 2,4-cyclodiphosphate synthase from Thermosynechococcus vestitus (strain NIES-2133 / IAM M-273 / BP-1).